We begin with the raw amino-acid sequence, 80 residues long: Cytochrome c oxidase subunit 7A1, mitochondrial (80 aa).

Residues methionine 1–arginine 21 constitute a mitochondrion transit peptide. At phenylalanine 22 to glycine 46 the chain is on the mitochondrial matrix side. The helical transmembrane segment at alanine 47 to serine 75 threads the bilayer. Residues phenylalanine 76–lysine 80 are Mitochondrial intermembrane-facing.

Belongs to the cytochrome c oxidase VIIa family. In terms of assembly, component of the complex IV (CIV, cytochrome c oxidase), a multisubunit enzyme composed of 14 subunits. The complex is composed of a catalytic core of 3 subunits MT-CO1, MT-CO2 and MT-CO3, encoded in the mitochondrial DNA, and 11 supernumerary subunits COX4I1 (or COX4I2), COX5A, COX5B, COX6A2 (or COX6A1), COX6B1 (or COX6B2), COX6C, COX7A1 (or COX7A2), COX7B, COX7C, COX8B and NDUFA4, which are encoded in the nuclear genome. The complex exists as a monomer or a dimer and forms supercomplexes (SCs) in the inner mitochondrial membrane with NADH-ubiquinone oxidoreductase (complex I, CI) and ubiquinol-cytochrome c oxidoreductase (cytochrome b-c1 complex, complex III, CIII), resulting in different assemblies (supercomplex SCI(1)III(2)IV(1) and megacomplex MCI(2)III(2)IV(2)).

The protein resides in the mitochondrion inner membrane. Its pathway is energy metabolism; oxidative phosphorylation. Functionally, component of the mitochondrial respiratory complex IV (CIV, also named cytochrome c oxidase complex), the last enzyme in the mitochondrial electron transport chain which drives oxidative phosphorylation. The CIV complex is the component of the respiratory chain that catalyzes the reduction of oxygen to water. Acts as an assembly factor that specifically drives the homodimerization of CIV complexes, mediating the formation of mitochondrial respiratory supercomplexes (respirasomes) containing two CIV: supercomplxes with two molecules of CIV show improved activity. Despite being highly expressed in brown adipose tissue, not required for thermogenesis. The protein is Cytochrome c oxidase subunit 7A1, mitochondrial (COX7A1) of Bos taurus (Bovine).